The sequence spans 525 residues: NAD(P)H-quinone oxidoreductase chain 4 1 (525 aa).

Helical transmembrane passes span F6–I26, W36–S56, L91–L111, L115–D135, L136–I156, F169–F189, L212–H232, T243–I263, F277–F297, M314–L334, Q335–D355, I375–A397, V417–M437, and V464–L484.

The protein belongs to the complex I subunit 4 family.

The protein localises to the cellular thylakoid membrane. The enzyme catalyses a plastoquinone + NADH + (n+1) H(+)(in) = a plastoquinol + NAD(+) + n H(+)(out). It carries out the reaction a plastoquinone + NADPH + (n+1) H(+)(in) = a plastoquinol + NADP(+) + n H(+)(out). In terms of biological role, NDH-1 shuttles electrons from NAD(P)H, via FMN and iron-sulfur (Fe-S) centers, to quinones in the respiratory chain. The immediate electron acceptor for the enzyme in this species is believed to be plastoquinone. Couples the redox reaction to proton translocation (for every two electrons transferred, four hydrogen ions are translocated across the cytoplasmic membrane), and thus conserves the redox energy in a proton gradient. This chain is NAD(P)H-quinone oxidoreductase chain 4 1, found in Trichormus variabilis (strain ATCC 29413 / PCC 7937) (Anabaena variabilis).